A 231-amino-acid polypeptide reads, in one-letter code: ATP-dependent dethiobiotin synthetase BioD (231 aa).

13–18 (DVGKTV) contacts ATP. Threonine 17 contacts Mg(2+). Lysine 38 is an active-site residue. Residues aspartate 55, 116-119 (EGAG), and 176-177 (NR) each bind ATP. Positions 55 and 116 each coordinate Mg(2+).

The protein belongs to the dethiobiotin synthetase family. In terms of assembly, homodimer. It depends on Mg(2+) as a cofactor.

It is found in the cytoplasm. It catalyses the reaction (7R,8S)-7,8-diammoniononanoate + CO2 + ATP = (4R,5S)-dethiobiotin + ADP + phosphate + 3 H(+). Its pathway is cofactor biosynthesis; biotin biosynthesis; biotin from 7,8-diaminononanoate: step 1/2. Functionally, catalyzes a mechanistically unusual reaction, the ATP-dependent insertion of CO2 between the N7 and N8 nitrogen atoms of 7,8-diaminopelargonic acid (DAPA, also called 7,8-diammoniononanoate) to form a ureido ring. The chain is ATP-dependent dethiobiotin synthetase BioD from Vibrio cholerae serotype O1 (strain ATCC 39315 / El Tor Inaba N16961).